Consider the following 549-residue polypeptide: CTP synthase (549 aa).

The segment at 1 to 272 (MPPKSTTTKH…DAYVVRKLDL (272 aa)) is amidoligase domain. Ser19 provides a ligand contact to CTP. A UTP-binding site is contributed by Ser19. Residues 20–25 (SLGKGL) and Asp77 contribute to the ATP site. Asp77 and Glu146 together coordinate Mg(2+). CTP contacts are provided by residues 153–155 (DIE), 193–198 (KTKPTQ), and Lys229. UTP-binding positions include 193–198 (KTKPTQ) and Lys229. The 252-residue stretch at 297–548 (NLALVGKYID…VKAAVERKTG (252 aa)) folds into the Glutamine amidotransferase type-1 domain. Gly360 serves as a coordination point for L-glutamine. Cys387 functions as the Nucleophile; for glutamine hydrolysis in the catalytic mechanism. L-glutamine-binding positions include 388 to 391 (LGLQ), Glu411, and Arg473. Catalysis depends on residues His521 and Glu523.

Belongs to the CTP synthase family. Homotetramer.

It catalyses the reaction UTP + L-glutamine + ATP + H2O = CTP + L-glutamate + ADP + phosphate + 2 H(+). The enzyme catalyses L-glutamine + H2O = L-glutamate + NH4(+). It carries out the reaction UTP + NH4(+) + ATP = CTP + ADP + phosphate + 2 H(+). Its pathway is pyrimidine metabolism; CTP biosynthesis via de novo pathway; CTP from UDP: step 2/2. Allosterically activated by GTP, when glutamine is the substrate; GTP has no effect on the reaction when ammonia is the substrate. The allosteric effector GTP functions by stabilizing the protein conformation that binds the tetrahedral intermediate(s) formed during glutamine hydrolysis. Inhibited by the product CTP, via allosteric rather than competitive inhibition. In terms of biological role, catalyzes the ATP-dependent amination of UTP to CTP with either L-glutamine or ammonia as the source of nitrogen. Regulates intracellular CTP levels through interactions with the four ribonucleotide triphosphates. The sequence is that of CTP synthase from Streptomyces avermitilis (strain ATCC 31267 / DSM 46492 / JCM 5070 / NBRC 14893 / NCIMB 12804 / NRRL 8165 / MA-4680).